Reading from the N-terminus, the 159-residue chain is Ribosomal RNA large subunit methyltransferase H (159 aa).

Residues Leu76, Gly108, and 127–132 (FSKMTF) contribute to the S-adenosyl-L-methionine site.

Belongs to the RNA methyltransferase RlmH family. As to quaternary structure, homodimer.

The protein localises to the cytoplasm. It carries out the reaction pseudouridine(1915) in 23S rRNA + S-adenosyl-L-methionine = N(3)-methylpseudouridine(1915) in 23S rRNA + S-adenosyl-L-homocysteine + H(+). In terms of biological role, specifically methylates the pseudouridine at position 1915 (m3Psi1915) in 23S rRNA. In Clostridium botulinum (strain 657 / Type Ba4), this protein is Ribosomal RNA large subunit methyltransferase H.